The sequence spans 441 residues: Methylenetetrahydrofolate--tRNA-(uracil-5-)-methyltransferase TrmFO (441 aa).

Residue 11 to 16 (GAGLAG) coordinates FAD.

This sequence belongs to the MnmG family. TrmFO subfamily. It depends on FAD as a cofactor.

Its subcellular location is the cytoplasm. The enzyme catalyses uridine(54) in tRNA + (6R)-5,10-methylene-5,6,7,8-tetrahydrofolate + NADH + H(+) = 5-methyluridine(54) in tRNA + (6S)-5,6,7,8-tetrahydrofolate + NAD(+). It catalyses the reaction uridine(54) in tRNA + (6R)-5,10-methylene-5,6,7,8-tetrahydrofolate + NADPH + H(+) = 5-methyluridine(54) in tRNA + (6S)-5,6,7,8-tetrahydrofolate + NADP(+). Catalyzes the folate-dependent formation of 5-methyl-uridine at position 54 (M-5-U54) in all tRNAs. The sequence is that of Methylenetetrahydrofolate--tRNA-(uracil-5-)-methyltransferase TrmFO from Lactiplantibacillus plantarum (strain ATCC BAA-793 / NCIMB 8826 / WCFS1) (Lactobacillus plantarum).